The chain runs to 530 residues: Feruloyl esterase C (530 aa).

A signal peptide spans 1 to 25 (MMLTSAILLLTLGVQLSHADDSSRE). 6 cysteine pairs are disulfide-bonded: Cys-31–Cys-78, Cys-66–Cys-117, Cys-190–Cys-444, Cys-259–Cys-276, Cys-285–Cys-294, and Cys-506–Cys-528. Ser-191 functions as the Acyl-ester intermediate in the catalytic mechanism. 5 residues coordinate Ca(2+): Asp-260, Asp-263, Ala-265, Asp-267, and Val-269. Catalysis depends on charge relay system residues Asp-403 and His-443.

This sequence belongs to the tannase family.

It is found in the secreted. It catalyses the reaction feruloyl-polysaccharide + H2O = ferulate + polysaccharide.. Its function is as follows. Involved in degradation of plant cell walls. Hydrolyzes the feruloyl-arabinose ester bond in arabinoxylans as well as the feruloyl-galactose and feruloyl-arabinose ester bonds in pectin. Active against methyl esters of sinapate (MSA) and caffeate (MCA). The chain is Feruloyl esterase C (faeC) from Talaromyces stipitatus (strain ATCC 10500 / CBS 375.48 / QM 6759 / NRRL 1006) (Penicillium stipitatum).